Here is a 91-residue protein sequence, read N- to C-terminus: MPRSLKKGPFIDLHLLKKIEVAAEKNDRKPVKTWSRRSMILPQMVGLTIAVHNGRQHVPVLVNEDMVGHKLGEFAGTRTYRGHVADKKAKR.

This sequence belongs to the universal ribosomal protein uS19 family.

Protein S19 forms a complex with S13 that binds strongly to the 16S ribosomal RNA. This chain is Small ribosomal subunit protein uS19, found in Pseudomonas syringae pv. syringae (strain B728a).